A 974-amino-acid polypeptide reads, in one-letter code: Localization factor PodJL (974 aa).

3 coiled-coil regions span residues 81 to 163 (DEVG…EAAG), 218 to 320 (VARL…SAQA), and 375 to 469 (QAQA…LEAA). Disordered stretches follow at residues 460–497 (SEAQ…SPFE) and 589–611 (AAAR…KKEK). Residues 589 to 598 (AAARAAAASE) show a composition bias toward low complexity. The helical transmembrane segment at 642-662 (ALVVFAAAGALGAGVGGLLLL) threads the bilayer. 3 Sel1-like repeats span residues 757-793 (PAAQ…NGGD), 794-829 (PRAM…DMGL), and 830-865 (VDSQ…RAGD).

Two isoforms exist, the full-length translation product PodJL and a C-terminal truncated form PodJS. Both appear during a specific time period of the cell cycle to control different aspects of polar organelle development.

The protein resides in the membrane. In terms of biological role, podJL provides the positional information for the localization of several polar organelles (pili, adhesive holdfast and chemotactic apparatus) by recruiting structural (CpaE) and regulatory (PleC) proteins to a specific cell pole. This chain is Localization factor PodJL (podJ), found in Caulobacter vibrioides (strain ATCC 19089 / CIP 103742 / CB 15) (Caulobacter crescentus).